The primary structure comprises 279 residues: Tryptophan 2,3-dioxygenase (279 aa).

Substrate-binding positions include 48 to 52 (FIIQH), Tyr110, and Arg114. His237 contributes to the heme binding site. Thr251 is a substrate binding site.

This sequence belongs to the tryptophan 2,3-dioxygenase family. Homotetramer. Heme is required as a cofactor.

The enzyme catalyses L-tryptophan + O2 = N-formyl-L-kynurenine. It participates in amino-acid degradation; L-tryptophan degradation via kynurenine pathway; L-kynurenine from L-tryptophan: step 1/2. In terms of biological role, heme-dependent dioxygenase that catalyzes the oxidative cleavage of the L-tryptophan (L-Trp) pyrrole ring and converts L-tryptophan to N-formyl-L-kynurenine. Catalyzes the oxidative cleavage of the indole moiety. The polypeptide is Tryptophan 2,3-dioxygenase (Bradyrhizobium diazoefficiens (strain JCM 10833 / BCRC 13528 / IAM 13628 / NBRC 14792 / USDA 110)).